A 363-amino-acid polypeptide reads, in one-letter code: D-xylulose reductase (363 aa).

Cys41, His66, and Glu159 together coordinate Zn(2+). 183–188 (GAGPVG) lines the NAD(+) pocket.

This sequence belongs to the zinc-containing alcohol dehydrogenase family. Zn(2+) serves as cofactor.

It carries out the reaction xylitol + NAD(+) = D-xylulose + NADH + H(+). Its pathway is carbohydrate degradation; L-arabinose degradation via L-arabinitol; D-xylulose 5-phosphate from L-arabinose (fungal route): step 4/5. This is D-xylulose reductase (XYL2) from Scheffersomyces stipitis (strain ATCC 58785 / CBS 6054 / NBRC 10063 / NRRL Y-11545) (Yeast).